A 290-amino-acid chain; its full sequence is Barley B recombinant-like protein C (290 aa).

Disordered regions lie at residues 60-90 (PHHH…YGMM) and 102-183 (QPEP…RKNI). The span at 104–116 (EPQPQLQHPPSPP) shows a compositional bias: pro residues. Basic residues predominate over residues 138–158 (PPKKRQQGRQPKVLRPKKPKK).

It belongs to the BBR/BPC family.

It is found in the nucleus. Its function is as follows. Transcriptional regulator that specifically binds to GA-rich elements (GAGA-repeats) present in regulatory sequences of genes involved in developmental processes. The polypeptide is Barley B recombinant-like protein C (Oryza sativa subsp. japonica (Rice)).